The sequence spans 82 residues: MVIIRLARGGAKKTPFYSVVVADSRNRRDGRFIERVGFYNPLAKEGQEGLRLNNERIAHWRDNGAQLSDTVARLVKQAQKSA.

Belongs to the bacterial ribosomal protein bS16 family.

In Methylobacillus flagellatus (strain ATCC 51484 / DSM 6875 / VKM B-1610 / KT), this protein is Small ribosomal subunit protein bS16.